A 217-amino-acid polypeptide reads, in one-letter code: Adenylate kinase (217 aa).

An ATP-binding site is contributed by 10 to 15 (GAGKGT). The NMP stretch occupies residues 30 to 59 (STGDMLRAQIKAGTELGMKAKAIMDAGGLV). AMP-binding positions include Thr-31, Arg-36, 57 to 59 (GLV), 85 to 88 (GFPR), and Gln-92. Positions 122–159 (GRRVHVASGRTYHVVFNPPKVAGKDDVTGEDLIQRDDD) are LID. Residues Arg-123 and 132–133 (TY) contribute to the ATP site. AMP is bound by residues Arg-156 and Arg-167. Gly-203 is a binding site for ATP.

This sequence belongs to the adenylate kinase family. As to quaternary structure, monomer.

The protein localises to the cytoplasm. The enzyme catalyses AMP + ATP = 2 ADP. Its pathway is purine metabolism; AMP biosynthesis via salvage pathway; AMP from ADP: step 1/1. In terms of biological role, catalyzes the reversible transfer of the terminal phosphate group between ATP and AMP. Plays an important role in cellular energy homeostasis and in adenine nucleotide metabolism. In Thiobacillus denitrificans (strain ATCC 25259 / T1), this protein is Adenylate kinase.